The primary structure comprises 351 residues: Phosphoribosylformylglycinamidine cyclo-ligase (351 aa).

It belongs to the AIR synthase family.

The protein resides in the cytoplasm. It carries out the reaction 2-formamido-N(1)-(5-O-phospho-beta-D-ribosyl)acetamidine + ATP = 5-amino-1-(5-phospho-beta-D-ribosyl)imidazole + ADP + phosphate + H(+). Its pathway is purine metabolism; IMP biosynthesis via de novo pathway; 5-amino-1-(5-phospho-D-ribosyl)imidazole from N(2)-formyl-N(1)-(5-phospho-D-ribosyl)glycinamide: step 2/2. The polypeptide is Phosphoribosylformylglycinamidine cyclo-ligase (Burkholderia pseudomallei (strain 668)).